Consider the following 188-residue polypeptide: dCTP deaminase (188 aa).

DCTP-binding positions include 111 to 116, 135 to 137, Gln-156, Tyr-170, and Gln-180; these read KSTYAR and TLE. Glu-137 (proton donor/acceptor) is an active-site residue.

Belongs to the dCTP deaminase family. In terms of assembly, homotrimer.

The enzyme catalyses dCTP + H2O + H(+) = dUTP + NH4(+). The protein operates within pyrimidine metabolism; dUMP biosynthesis; dUMP from dCTP (dUTP route): step 1/2. Functionally, catalyzes the deamination of dCTP to dUTP. This chain is dCTP deaminase, found in Pseudomonas putida (strain W619).